Here is a 302-residue protein sequence, read N- to C-terminus: Sulfate adenylyltransferase subunit 2 (302 aa).

Belongs to the PAPS reductase family. CysD subfamily. As to quaternary structure, heterodimer composed of CysD, the smaller subunit, and CysN.

It carries out the reaction sulfate + ATP + H(+) = adenosine 5'-phosphosulfate + diphosphate. Its pathway is sulfur metabolism; hydrogen sulfide biosynthesis; sulfite from sulfate: step 1/3. Functionally, with CysN forms the ATP sulfurylase (ATPS) that catalyzes the adenylation of sulfate producing adenosine 5'-phosphosulfate (APS) and diphosphate, the first enzymatic step in sulfur assimilation pathway. APS synthesis involves the formation of a high-energy phosphoric-sulfuric acid anhydride bond driven by GTP hydrolysis by CysN coupled to ATP hydrolysis by CysD. This is Sulfate adenylyltransferase subunit 2 from Methylococcus capsulatus (strain ATCC 33009 / NCIMB 11132 / Bath).